Reading from the N-terminus, the 370-residue chain is 3-isopropylmalate dehydrogenase (370 aa).

77–90 is a binding site for NAD(+); the sequence is GPKWDSVPYEVRPE. Residues Arg97, Arg107, Arg135, and Asp226 each coordinate substrate. The Mg(2+) site is built by Asp226, Asp250, and Asp254. 290 to 302 provides a ligand contact to NAD(+); the sequence is GSAPDIAGKGIAN.

The protein belongs to the isocitrate and isopropylmalate dehydrogenases family. LeuB type 1 subfamily. In terms of assembly, homodimer. Mg(2+) is required as a cofactor. Mn(2+) serves as cofactor.

It localises to the cytoplasm. The catalysed reaction is (2R,3S)-3-isopropylmalate + NAD(+) = 4-methyl-2-oxopentanoate + CO2 + NADH. It participates in amino-acid biosynthesis; L-leucine biosynthesis; L-leucine from 3-methyl-2-oxobutanoate: step 3/4. Catalyzes the oxidation of 3-carboxy-2-hydroxy-4-methylpentanoate (3-isopropylmalate) to 3-carboxy-4-methyl-2-oxopentanoate. The product decarboxylates to 4-methyl-2 oxopentanoate. This is 3-isopropylmalate dehydrogenase from Brucella abortus (strain 2308).